A 256-amino-acid polypeptide reads, in one-letter code: POU domain class 2-associating factor 1 (256 aa).

The segment at 1-23 (MLWQKPTAPEQAPAPPRPYQGVR) is disordered. An OCA domain is found at 16–38 (PRPYQGVRVKEPVKELLRRKRGH).

It belongs to the POU2AF family. Interacts with POU2F1/OCT1 and POU2F2/OCT2; the interaction increases POU2F1 and POU2F2 transactivation activity. Ubiquitinated; mediated by SIAH1 or SIAH2 and leading to its subsequent proteasomal degradation.

It localises to the nucleus. Its function is as follows. Transcriptional coactivator that specifically associates with either POU2F1/OCT1 or POU2F2/OCT2. It boosts the POU2F1/OCT1 mediated promoter activity and to a lesser extent, that of POU2F2/OCT2. It recognizes the POU domains of POU2F1/OCT1 and POU2F2/OCT2. It is essential for the response of B-cells to antigens and required for the formation of germinal centers. Regulates IL6 expression in B cells as POU2F2/OCT2 coactivator. The sequence is that of POU domain class 2-associating factor 1 (POU2AF1) from Bos taurus (Bovine).